Reading from the N-terminus, the 430-residue chain is MALEGMSKRKRKRSVQEGENPDDGVRGSPPEDYRLGQVASSLFRGEHHSRGGTGRLASLFSSLEPQIQPVYVPVPKQTIKKTKRNEEEESTSQIERPLSQEPAKKVKAKKKHTNAEKKLADRESALASADLEEEIHQKQGQKRKNSQPGVKVADRKILDDTEDTVVSQRKKIQINQEEERLKNERTVFVGNLPVTCNKKKLKSFFKEYGQIESVRFRSLIPAEGTLSKKLAAIKRKIHPDQKNINAYVVFKEESAATQALKRNGAQIADGFRIRVDLASETSSRDKRSVFVGNLPYKVEESAIEKHFLDCGSIMAVRIVRDKMTGIGKGFGYVLFENTDSVHLALKLNNSELMGRKLRVMRSVNKEKFKQQNSNPRLKNVSKPKQGLNFTSKTAEGHPKSLFIGEKAVLLKTKKKGQKKSGRPKKQRKQK.

3 disordered regions span residues 1–55 (MALE…GTGR), 72–123 (VPVP…ADRE), and 134–153 (EIHQKQGQKRKNSQPGVKVA). 3 positions are modified to phosphoserine: Ser-14, Ser-28, and Ser-99. A compositionally biased stretch (basic and acidic residues) spans 23 to 34 (DGVRGSPPEDYR). A compositionally biased stretch (basic and acidic residues) spans 113–123 (TNAEKKLADRE). N6-acetyllysine is present on Lys-151. RRM domains lie at 185–280 (RTVF…LASE) and 287–364 (RSVF…RSVN). Lys-242 participates in a covalent cross-link: Glycyl lysine isopeptide (Lys-Gly) (interchain with G-Cter in SUMO2). Position 288 is a phosphoserine (Ser-288). Disordered stretches follow at residues 365-395 (KEKFKQQNSNPRLKNVSKPKQGLNFTSKTAE) and 411-430 (KTKKKGQKKSGRPKKQRKQK).

The protein belongs to the RRM RBM34 family.

It localises to the nucleus. Its subcellular location is the nucleolus. In Homo sapiens (Human), this protein is RNA-binding protein 34 (RBM34).